We begin with the raw amino-acid sequence, 626 residues long: (R)-linalool synthase 2, chloroplastic (626 aa).

The N-terminal 21 residues, 1 to 21 (MAFVSIAPLASRCCVHKSFVS), are a transit peptide targeting the chloroplast. Positions 377, 381, and 529 each coordinate Mg(2+). The DDXXD motif motif lies at 377–381 (DDIYD).

The protein belongs to the terpene synthase family. Tpsd subfamily. Mg(2+) serves as cofactor. Mn(2+) is required as a cofactor.

The protein resides in the plastid. The protein localises to the chloroplast. The enzyme catalyses (2E)-geranyl diphosphate + H2O = (R)-linalool + diphosphate. The protein operates within terpene metabolism; oleoresin biosynthesis. Its function is as follows. Terpene synthase (mono-TPS) involved in the biosynthesis of monoterpene natural products included in conifer oleoresin secretions and volatile emissions; these compounds contribute to biotic and abiotic stress defense against herbivores and pathogens. Catalyzes the conversion of (2E)-geranyl diphosphate (GPP) to (R)-linalool. The polypeptide is (R)-linalool synthase 2, chloroplastic (Picea sitchensis (Sitka spruce)).